Reading from the N-terminus, the 172-residue chain is Thioredoxin Y1, chloroplastic (172 aa).

The N-terminal 62 residues, 1-62 (MASISLSSST…SSTTRCTPRR (62 aa)), are a transit peptide targeting the chloroplast. Positions 63–169 (IEAKKQTFDS…LIQRIEDSLK (107 aa)) constitute a Thioredoxin domain. Catalysis depends on nucleophile residues Cys-93 and Cys-96. A disulfide bond links Cys-93 and Cys-96.

The protein belongs to the thioredoxin family. Plant Y-type subfamily. As to expression, expressed in roots and seeds.

The protein localises to the plastid. It localises to the chloroplast stroma. Thiol-disulfide oxidoreductase that poorly activates chloroplastic malate dehydrogenase (NADP-MDH) and fructose-1,6-bisphosphatase. Provides reducing equivalents for peroxiredoxin Q. The sequence is that of Thioredoxin Y1, chloroplastic from Arabidopsis thaliana (Mouse-ear cress).